We begin with the raw amino-acid sequence, 373 residues long: MEGITSFENLPEELKREILLRMSPNSLVTCSRVSKKLASMIRTKSFKELYLSRSMRCPRVLFAANGTITPHVLFTSFQEKEKPLLSSGEQRIITSLQGEFLFSPPVRGLICLVERESARIVICNPGTTKFLALPIVEADETTRIITHLGYDEQKDVFKVLCTRTKPETPHLVLTVGSGKEPWREIVCKFPHTVIGAGVFYRGTLYYLAAFHSKSIIMTFDVRSETFMPITSPDGVDLNQGSWRLVNYSQQGGFALVNESRGFIYQSNGGDAYLETWVWNVDTRKWSMNSILIRKWKDYAQDNEDYDYRFRGTQGTYELVFAPIRVKEDGSLTVILYNTDTQAFRRSKVQMMGEGHEFRFVDTFLDHVDSTLLI.

The region spanning 4 to 49 is the F-box domain; the sequence is ITSFENLPEELKREILLRMSPNSLVTCSRVSKKLASMIRTKSFKEL.

The protein is Putative F-box protein At1g76830 of Arabidopsis thaliana (Mouse-ear cress).